The primary structure comprises 361 residues: MNVTNEKMRFWSPEVRELEPYVPGEQPKIQNLLKLNTNENPYPPSPKVKAAVETVLVDQADALRLYPDPDASLLKQAIAKQQHLSVEQVFVGNGSDEVLAHIFKAFFIQDEPILYPDISYSFYPVYSQFFGVQTKQIPLNDHFEIVVEDYQQNNGGIIIANPNAPTSIALSLKNIEQILKNNPDRVVVIDEAYVDFGAESAASLVNQYDNLVVCQTTSKSRSLAGLRVGYALAQAHLIAALEAVKNSFNSYPIDRFAIAAAVASFEDQAYFEEQCLKVIQSREQLIEQLETIGFDVLPSKANFIFVTHPAHVAIELAKALREQGIIVRHFNKPRINQYLRITVGTDEQNQRLVNTLKLFIN.

N6-(pyridoxal phosphate)lysine is present on Lys-219.

Belongs to the class-II pyridoxal-phosphate-dependent aminotransferase family. Histidinol-phosphate aminotransferase subfamily. As to quaternary structure, homodimer. It depends on pyridoxal 5'-phosphate as a cofactor.

The catalysed reaction is L-histidinol phosphate + 2-oxoglutarate = 3-(imidazol-4-yl)-2-oxopropyl phosphate + L-glutamate. The protein operates within amino-acid biosynthesis; L-histidine biosynthesis; L-histidine from 5-phospho-alpha-D-ribose 1-diphosphate: step 7/9. This is Histidinol-phosphate aminotransferase from Acinetobacter baylyi (strain ATCC 33305 / BD413 / ADP1).